We begin with the raw amino-acid sequence, 329 residues long: Aspartate carbamoyltransferase catalytic subunit (329 aa).

Residues Arg63 and Thr64 each contribute to the carbamoyl phosphate site. Lys91 is a binding site for L-aspartate. Carbamoyl phosphate-binding residues include Arg113, His141, and Gln144. The L-aspartate site is built by Arg179 and Arg234. Carbamoyl phosphate is bound by residues Gly275 and Pro276.

This sequence belongs to the aspartate/ornithine carbamoyltransferase superfamily. ATCase family. As to quaternary structure, heterododecamer (2C3:3R2) of six catalytic PyrB chains organized as two trimers (C3), and six regulatory PyrI chains organized as three dimers (R2).

It catalyses the reaction carbamoyl phosphate + L-aspartate = N-carbamoyl-L-aspartate + phosphate + H(+). It participates in pyrimidine metabolism; UMP biosynthesis via de novo pathway; (S)-dihydroorotate from bicarbonate: step 2/3. Its function is as follows. Catalyzes the condensation of carbamoyl phosphate and aspartate to form carbamoyl aspartate and inorganic phosphate, the committed step in the de novo pyrimidine nucleotide biosynthesis pathway. The polypeptide is Aspartate carbamoyltransferase catalytic subunit (Magnetococcus marinus (strain ATCC BAA-1437 / JCM 17883 / MC-1)).